The primary structure comprises 649 residues: Probable potassium transport system protein Kup (649 aa).

The next 12 helical transmembrane spans lie at 1 to 21 (MAIV…LYTM), 42 to 62 (ILSL…VFIA), 84 to 104 (GAWL…DSVL), 126 to 146 (IMSG…VCLF), 159 to 179 (TFGT…LVNL), 195 to 215 (VEFL…TVFL), 235 to 255 (IYFT…GQGA), 286 to 306 (VAVL…ITGA), 334 to 354 (LYIP…LAMF), 364 to 384 (YGLA…VYIW), 390 to 410 (VGAV…FFAS), and 414 to 434 (FLHG…IMYT).

This sequence belongs to the HAK/KUP transporter (TC 2.A.72) family.

The protein resides in the cell membrane. The catalysed reaction is K(+)(in) + H(+)(in) = K(+)(out) + H(+)(out). Functionally, transport of potassium into the cell. Likely operates as a K(+):H(+) symporter. This chain is Probable potassium transport system protein Kup, found in Bifidobacterium adolescentis (strain ATCC 15703 / DSM 20083 / NCTC 11814 / E194a).